The following is a 230-amino-acid chain: Sugar fermentation stimulation protein homolog (230 aa).

It belongs to the SfsA family.

The protein is Sugar fermentation stimulation protein homolog of Clostridium botulinum (strain Okra / Type B1).